Reading from the N-terminus, the 407-residue chain is Chorismate synthase (407 aa).

NADP(+)-binding residues include Arg-43 and Arg-49. FMN contacts are provided by residues 143 to 145 (RSS), 264 to 265 (QA), Gly-308, 323 to 327 (KPIST), and Arg-349.

This sequence belongs to the chorismate synthase family. Homotetramer. Requires FMNH2 as cofactor.

It catalyses the reaction 5-O-(1-carboxyvinyl)-3-phosphoshikimate = chorismate + phosphate. It functions in the pathway metabolic intermediate biosynthesis; chorismate biosynthesis; chorismate from D-erythrose 4-phosphate and phosphoenolpyruvate: step 7/7. Catalyzes the anti-1,4-elimination of the C-3 phosphate and the C-6 proR hydrogen from 5-enolpyruvylshikimate-3-phosphate (EPSP) to yield chorismate, which is the branch point compound that serves as the starting substrate for the three terminal pathways of aromatic amino acid biosynthesis. This reaction introduces a second double bond into the aromatic ring system. This is Chorismate synthase from Corynebacterium efficiens (strain DSM 44549 / YS-314 / AJ 12310 / JCM 11189 / NBRC 100395).